A 276-amino-acid polypeptide reads, in one-letter code: Dermonecrotic toxin LsaSicTox-alphaIB2i (276 aa).

His5 is a catalytic residue. Mg(2+) contacts are provided by Glu25 and Asp27. The Nucleophile role is filled by His41. 2 cysteine pairs are disulfide-bonded: Cys45/Cys51 and Cys47/Cys190. Asp85 is a Mg(2+) binding site. 2 N-linked (GlcNAc...) asparagine glycosylation sites follow: Asn129 and Asn253.

Belongs to the arthropod phospholipase D family. Class II subfamily. Mg(2+) serves as cofactor. Expressed by the venom gland.

It is found in the secreted. The catalysed reaction is an N-(acyl)-sphingosylphosphocholine = an N-(acyl)-sphingosyl-1,3-cyclic phosphate + choline. It catalyses the reaction an N-(acyl)-sphingosylphosphoethanolamine = an N-(acyl)-sphingosyl-1,3-cyclic phosphate + ethanolamine. It carries out the reaction a 1-acyl-sn-glycero-3-phosphocholine = a 1-acyl-sn-glycero-2,3-cyclic phosphate + choline. The enzyme catalyses a 1-acyl-sn-glycero-3-phosphoethanolamine = a 1-acyl-sn-glycero-2,3-cyclic phosphate + ethanolamine. Functionally, dermonecrotic toxins cleave the phosphodiester linkage between the phosphate and headgroup of certain phospholipids (sphingolipid and lysolipid substrates), forming an alcohol (often choline) and a cyclic phosphate. This toxin acts on sphingomyelin (SM). It may also act on ceramide phosphoethanolamine (CPE), lysophosphatidylcholine (LPC) and lysophosphatidylethanolamine (LPE), but not on lysophosphatidylserine (LPS), and lysophosphatidylglycerol (LPG). It acts by transphosphatidylation, releasing exclusively cyclic phosphate products as second products. Induces dermonecrosis, hemolysis, increased vascular permeability, edema, inflammatory response, and platelet aggregation. This Loxosceles sabina (Tucson recluse spider) protein is Dermonecrotic toxin LsaSicTox-alphaIB2i.